The sequence spans 105 residues: Putative neurotoxin 10 (105 aa).

The first 21 residues, methionine 1 to alanine 21, serve as a signal peptide directing secretion.

The protein belongs to the scolopendra neurotoxin 10 family. Post-translationally, contains 3 disulfide bonds. Expressed by the venom gland.

It is found in the secreted. The sequence is that of Putative neurotoxin 10 from Scolopendra subspinipes (Vietnamese centipede).